The following is a 917-amino-acid chain: MTENNEKVKNSDSANNQSSKNSKFNFNFEDKKVKCAKTILIIIFLAFLSFQMRAQTADMGFTTNEQYLDVFSDDNGRMYLTALDPYYYLRMSENYLENGHTGDTLKNIDGQQVPWDSYKYGPTGARATFNLLSVVTVWVYQVWHAMDSTVTLMNAAFWVPAILSMFLITPIFFTVRRITSSDIGGAVAAILASLSPSIFVKTVAGFSDTPILEILPLLFIVWFIIEAIHYSKEKNYKSLIYGLLATLMLALYPFMWSAWWYGYYIVIAFLVIYAIYKGISYNSIAKYTKSKNNNHKDKIESEKLEMLNILKISGLFIIGGAVLITALYGVSTTMNALQAPLNYLGLDEVSSQTGWPNVLTTVSELDTASLDEIISSSLGSIHLFAIGLIGIFLSLFRKVLTPVKQISNGLAEKLDIKYALLLIIWFAVTFLAASKGVRFVALMVPPLSIGVGIFVGFIEQFIKNNLDKKYEYVAYPTIAIIVLYALFTIYRADSADLVRMLLPSNYVPIAEGIMLASLAVLIIYKVAELIAESNKKLVMNKIFMILLAIGLITPTIATIVPFYSVPTYNDGWGESLEWINTQTPNNSVVTCWWDNGHIYTWKTDRMVTFDGSSQNTPRAYWVGRAFSTSNESLANGIFRMLASSGDKAYTTDSVLIKKTGSIKNTVDVLNEILPLTKSDAQKALKNSSYKFTDTEVSEILDATHPKVTNPDYLITYNRMTSIASVWSYFGNWDFNLPAGTSRSEREAGSFQGLQTYATNINDTLIVRSLIQQTAEYNIYTLIEVRNETLTGAMMAVTNDGQMQTQQLNMHKVKLMVNENGKSKMYNSLADPDGQLSLLIKVDKNSIIGTDGSNNPVYSSSSWMATANLEDSVYSKLHFFDGEGLDTIKLEKESLDPTANGVQPGFKVFSVDYGNYSK.

Basic and acidic residues predominate over residues 1 to 10 (MTENNEKVKN). Residues 1-20 (MTENNEKVKNSDSANNQSSK) are disordered. The Cytoplasmic segment spans residues 1–38 (MTENNEKVKNSDSANNQSSKNSKFNFNFEDKKVKCAKT). Residues 11-20 (SDSANNQSSK) are compositionally biased toward low complexity. A helical membrane pass occupies residues 39-59 (ILIIIFLAFLSFQMRAQTADM). The Extracellular portion of the chain corresponds to 60-154 (GFTTNEQYLD…AMDSTVTLMN (95 aa)). The DXD motif 1 motif lies at 82–84 (ALD). Residue D84 participates in Mn(2+) binding. The chain crosses the membrane as a helical span at residues 155-175 (AAFWVPAILSMFLITPIFFTV). Residues 176–182 (RRITSSD) are Cytoplasmic-facing. Residues 183–203 (IGGAVAAILASLSPSIFVKTV) traverse the membrane as a helical segment. At 204–209 (AGFSDT) the chain is on the extracellular side. D208 contacts Mn(2+). Positions 208-210 (DTP) match the DXD motif 2 motif. A helical membrane pass occupies residues 210 to 230 (PILEILPLLFIVWFIIEAIHY). The Cytoplasmic segment spans residues 231–237 (SKEKNYK). A helical transmembrane segment spans residues 238–260 (SLIYGLLATLMLALYPFMWSAWW). The Extracellular portion of the chain corresponds to 261-263 (YGY). The chain crosses the membrane as a helical span at residues 264-286 (YIVIAFLVIYAIYKGISYNSIAK). Over 287-308 (YTKSKNNNHKDKIESEKLEMLN) the chain is Cytoplasmic. Residues 309–329 (ILKISGLFIIGGAVLITALYG) traverse the membrane as a helical segment. Topologically, residues 330 to 372 (VSTTMNALQAPLNYLGLDEVSSQTGWPNVLTTVSELDTASLDE) are extracellular. The TIXE motif motif lies at 361–364 (TVSE). E364 is a Mn(2+) binding site. A helical membrane pass occupies residues 373-393 (IISSSLGSIHLFAIGLIGIFL). Residues 394-413 (SLFRKVLTPVKQISNGLAEK) are Cytoplasmic-facing. A helical transmembrane segment spans residues 414 to 434 (LDIKYALLLIIWFAVTFLAAS). At 435 to 438 (KGVR) the chain is on the extracellular side. An a glycophospholipid-binding site is contributed by R438. Residues 439-459 (FVALMVPPLSIGVGIFVGFIE) form a helical membrane-spanning segment. The Cytoplasmic portion of the chain corresponds to 460-469 (QFIKNNLDKK). A helical transmembrane segment spans residues 470 to 490 (YEYVAYPTIAIIVLYALFTIY). At 491 to 506 (RADSADLVRMLLPSNY) the chain is on the extracellular side. A helical membrane pass occupies residues 507–527 (VPIAEGIMLASLAVLIIYKVA). The Cytoplasmic portion of the chain corresponds to 528 to 541 (ELIAESNKKLVMNK). A helical membrane pass occupies residues 542 to 562 (IFMILLAIGLITPTIATIVPF). Residues 563–917 (YSVPTYNDGW…FSVDYGNYSK (355 aa)) are Extracellular-facing. Residues 592 to 594 (WWD) form an interacts with target acceptor peptide in protein substrate region. The WWDYG motif motif lies at 592-596 (WWDNG). The MI motif motif lies at 719 to 726 (MTSIASVW).

The protein belongs to the STT3 family. It depends on Mn(2+) as a cofactor. Mg(2+) serves as cofactor.

It is found in the cell membrane. It catalyses the reaction an archaeal dolichyl phosphooligosaccharide + [protein]-L-asparagine = an archaeal dolichyl phosphate + a glycoprotein with the oligosaccharide chain attached by N-beta-D-glycosyl linkage to a protein L-asparagine.. Its pathway is cell surface structure biogenesis; S-layer biogenesis. The protein operates within protein modification; protein glycosylation. Oligosaccharyl transferase (OST) that catalyzes the initial transfer of a defined glycan (ManNAcGlc-2,3-diNAcAGlcNAc in M.voltae) from the lipid carrier dolichol-monophosphate to an asparagine residue within an Asn-X-Ser/Thr consensus motif in nascent polypeptide chains, the first step in protein N-glycosylation. Involved in the assembly of an N-linked disaccharide that decorates the S-layer glycoprotein and flagellins. This is Dolichyl-phosphooligosaccharide-protein glycotransferase from Methanococcus voltae.